Reading from the N-terminus, the 145-residue chain is Large ribosomal subunit protein uL13 (145 aa).

It belongs to the universal ribosomal protein uL13 family. Part of the 50S ribosomal subunit.

In terms of biological role, this protein is one of the early assembly proteins of the 50S ribosomal subunit, although it is not seen to bind rRNA by itself. It is important during the early stages of 50S assembly. In Bacillus licheniformis (strain ATCC 14580 / DSM 13 / JCM 2505 / CCUG 7422 / NBRC 12200 / NCIMB 9375 / NCTC 10341 / NRRL NRS-1264 / Gibson 46), this protein is Large ribosomal subunit protein uL13.